The primary structure comprises 223 residues: Endonuclease V (223 aa).

2 residues coordinate Mg(2+): Asp35 and Asp103.

This sequence belongs to the endonuclease V family. It depends on Mg(2+) as a cofactor.

The protein localises to the cytoplasm. It carries out the reaction Endonucleolytic cleavage at apurinic or apyrimidinic sites to products with a 5'-phosphate.. DNA repair enzyme involved in the repair of deaminated bases. Selectively cleaves double-stranded DNA at the second phosphodiester bond 3' to a deoxyinosine leaving behind the intact lesion on the nicked DNA. The polypeptide is Endonuclease V (Shigella dysenteriae serotype 1 (strain Sd197)).